Consider the following 375-residue polypeptide: MLFNVSACDIRDKPMPSNNDINKIDQLERVKKVRKNSSQSEAGSSSSGNSSFVALVKASNLKEDALYLPQDCTSSNGLNKKCRKIFLTDGGDRSWEMDLKFDKNLDSFCITRGWRHFCDENGKKLPNQERFVTVRLVPDCLRNKRLYLSRRFLKNNGLGEPKMVTLVGTDGTRILANLLRESTGRMSLGRGWVDFAKANRLKIGEYFTLESIWENDSPILSLYGTNTSKSDKRKRRENFPVACEKEYVSTEARNRNEPEKDKNTEEMINQASLSENRLVITLVPEDVKAGMLRLPSHFMKANGIDKVGKIYMLGINEMEWWWGDLLTRDGIVSVGCGWRYFCESNGVKIGKSFTLECMYKYDTRPVFKFCPKSGK.

3 DNA-binding regions (TF-B3) span residues 51-147 (SFVA…KRLY), 131-226 (FVTV…YGTN), and 277-375 (RLVI…KSGK).

The protein resides in the nucleus. This chain is B3 domain-containing protein REM-like 2, found in Arabidopsis thaliana (Mouse-ear cress).